Here is a 307-residue protein sequence, read N- to C-terminus: Regulating synaptic membrane exocytosis protein 3 (307 aa).

Positions 86 to 120 are disordered; that stretch reads STETGIAVEMRSRVTRQGSRESTDGSTNSNSSEGT. A compositionally biased stretch (polar residues) spans 109 to 119; that stretch reads DGSTNSNSSEG. Positions 155–273 constitute a C2 domain; the sequence is PMGDVHIAIM…DLSAAVTGWY (119 aa). Phosphoserine occurs at positions 294 and 297.

As to quaternary structure, binds PPFIA3. Does not bind RAB3.

The protein localises to the synapse. Functionally, regulates synaptic membrane exocytosis. This chain is Regulating synaptic membrane exocytosis protein 3 (Rims3), found in Mus musculus (Mouse).